The primary structure comprises 846 residues: Homeodomain-interacting protein kinase 1 (846 aa).

The interval 47–74 (NPFSIQKAPGTSSDNEQRAPKRRADEEA) is disordered. The segment covering 61–72 (NEQRAPKRRADE) has biased composition (basic and acidic residues). A Protein kinase domain is found at 147-483 (YEVLEFLGKG…PAEGLESKFV (337 aa)). Residues 153–161 (LGKGTFGQV) and Lys176 contribute to the ATP site. Residue Asp272 is the Proton acceptor of the active site. Residues 741–790 (LAAQPKKNSPAPSVITLSSDEDSNGAGSSNSGSTTRTGAVNPVRNDTLPM) are disordered. Positions 746–757 (KKNSPAPSVITL) are enriched in polar residues. Over residues 764–773 (NGAGSSNSGS) the composition is skewed to low complexity.

This sequence belongs to the protein kinase superfamily. CMGC Ser/Thr protein kinase family. HIPK subfamily. Broadly expressed during embryogenesis. Expression becomes more restricted during larval development. L3 larvae display robust expression in many head and motor neurons, and lower levels of expression in the intestine and the seam cells of the hypodermis. By late L4 stage, expression is largely restricted to neurons and is maintained in nerve cells of the head and nerve cord during adulthood. Expressed in adult pharyngeal cells, hypodermal cells, gonadal sheath cells and distal tip cells but not in germline cells. Expressed in serotonergic neurons such as ADF and NSM and in GABAergic neurons, including RME, RIS and DVB.

It is found in the nucleus. The catalysed reaction is L-seryl-[protein] + ATP = O-phospho-L-seryl-[protein] + ADP + H(+). It catalyses the reaction L-threonyl-[protein] + ATP = O-phospho-L-threonyl-[protein] + ADP + H(+). Functionally, serine/threonine-protein kinase required in the somatic gonadal cells to regulate germline proliferation during larval development and in adulthood. Plays a role in the development/differentiation of gonadal distal tip cells. Required for normal lifespan in a pha-4 and mxl-2-dependent manner. Also contributes to survival following heat or oxidative stress. Prevents sumoylation and inactivation of heat shock transcription factor hsf-1 which enhances hsf-1-dependent transcriptional induction of chaperones in response to heat shock. Also required for hormetic extension of longevity in response to heat stress. Also contributes to longevity by promoting autophagy under nutrient stress conditions through induction of autophagosome formation and autophagy gene expression. Provides protection against proteotoxic polyglutamine aggregate and the associated locomotory toxicity, probably as a result of kinase activity. Contributes to longevity via gamma-aminobutyric acid (GABA)ergic signaling by promoting autophagy through mxl-2, hlh-30 and daf-16 but independent of hsf-1 and phas-4, to induce autophagosome formation and the expression of autophagy genes. Promotes thermotolerance via serotonergic signaling by serotonergic neurons. Preserves neuronal function in aging animals by mitigating against age-associated decline in axonal and synaptic transmissions. Acts as an activator of nhr-49-dependent hypoxia response, including the up-regulation of fmo-2 and acs-2, the induction of autophagosome formation and expression of autophagy genes. The polypeptide is Homeodomain-interacting protein kinase 1 (Caenorhabditis elegans).